We begin with the raw amino-acid sequence, 26 residues long: Potassium channel toxin alpha-KTx6 OcyKTx1 (26 aa).

Cysteines 3 and 24 form a disulfide.

This sequence belongs to the short scorpion toxin superfamily. Potassium channel inhibitor family. Alpha-KTx 06 subfamily. Expressed by the venom gland.

The protein resides in the secreted. Its function is as follows. Blocks voltage-gated potassium channels. The sequence is that of Potassium channel toxin alpha-KTx6 OcyKTx1 from Opisthacanthus cayaporum (South American scorpion).